The following is a 367-amino-acid chain: DNA replication and repair protein RecF (367 aa).

Position 30 to 37 (30 to 37) interacts with ATP; the sequence is GSNGSGKT.

This sequence belongs to the RecF family.

It localises to the cytoplasm. Functionally, the RecF protein is involved in DNA metabolism; it is required for DNA replication and normal SOS inducibility. RecF binds preferentially to single-stranded, linear DNA. It also seems to bind ATP. The sequence is that of DNA replication and repair protein RecF from Pseudomonas putida (strain ATCC 700007 / DSM 6899 / JCM 31910 / BCRC 17059 / LMG 24140 / F1).